The sequence spans 186 residues: Elongation factor P (186 aa).

This sequence belongs to the elongation factor P family.

The protein localises to the cytoplasm. Its pathway is protein biosynthesis; polypeptide chain elongation. Its function is as follows. Involved in peptide bond synthesis. Stimulates efficient translation and peptide-bond synthesis on native or reconstituted 70S ribosomes in vitro. Probably functions indirectly by altering the affinity of the ribosome for aminoacyl-tRNA, thus increasing their reactivity as acceptors for peptidyl transferase. This is Elongation factor P from Coprothermobacter proteolyticus (strain ATCC 35245 / DSM 5265 / OCM 4 / BT).